A 320-amino-acid chain; its full sequence is ATP-dependent 6-phosphofructokinase (320 aa).

Gly12 contacts ATP. ADP contacts are provided by residues 22–26 (RGVVR) and 55–60 (RYSVSD). ATP contacts are provided by residues 73–74 (RF) and 103–106 (GDGS). Asp104 lines the Mg(2+) pocket. 126 to 128 (TID) is a substrate binding site. Asp128 serves as the catalytic Proton acceptor. An ADP-binding site is contributed by Arg155. Substrate-binding positions include Arg163 and 170–172 (MGR). Residues 186–188 (GCE), Lys212, and 214–216 (KKH) each bind ADP. Residues Glu223, Arg244, and 250 to 253 (HIQR) contribute to the substrate site.

This sequence belongs to the phosphofructokinase type A (PFKA) family. ATP-dependent PFK group I subfamily. Prokaryotic clade 'B1' sub-subfamily. Homotetramer. It depends on Mg(2+) as a cofactor.

Its subcellular location is the cytoplasm. It catalyses the reaction beta-D-fructose 6-phosphate + ATP = beta-D-fructose 1,6-bisphosphate + ADP + H(+). Its pathway is carbohydrate degradation; glycolysis; D-glyceraldehyde 3-phosphate and glycerone phosphate from D-glucose: step 3/4. Its activity is regulated as follows. Allosterically activated by ADP and other diphosphonucleosides, and allosterically inhibited by phosphoenolpyruvate. In terms of biological role, catalyzes the phosphorylation of D-fructose 6-phosphate to fructose 1,6-bisphosphate by ATP, the first committing step of glycolysis. The chain is ATP-dependent 6-phosphofructokinase from Klebsiella pneumoniae (strain 342).